The primary structure comprises 1058 residues: Carbamoyl phosphate synthase large chain (1058 aa).

The carboxyphosphate synthetic domain stretch occupies residues methionine 1–glutamate 401. ATP contacts are provided by arginine 129, arginine 169, glycine 175, glycine 176, arginine 208, isoleucine 210, glutamate 215, glycine 241, isoleucine 242, histidine 243, glutamine 284, and glutamate 298. An ATP-grasp 1 domain is found at lysine 133–valine 327. Positions 284, 298, and 300 each coordinate Mg(2+). Glutamine 284, glutamate 298, and asparagine 300 together coordinate Mn(2+). The oligomerization domain stretch occupies residues isoleucine 402–serine 546. Residues isoleucine 547–tyrosine 929 form a carbamoyl phosphate synthetic domain region. The 191-residue stretch at glutamate 671–leucine 861 folds into the ATP-grasp 2 domain. ATP is bound by residues arginine 707, serine 746, isoleucine 748, glutamate 752, glycine 777, valine 778, histidine 779, serine 780, glutamine 820, and glutamate 832. Mg(2+)-binding residues include glutamine 820, glutamate 832, and asparagine 834. Mn(2+)-binding residues include glutamine 820, glutamate 832, and asparagine 834. In terms of domain architecture, MGS-like spans leucine 930–isoleucine 1058. The segment at leucine 930 to isoleucine 1058 is allosteric domain.

Belongs to the CarB family. As to quaternary structure, composed of two chains; the small (or glutamine) chain promotes the hydrolysis of glutamine to ammonia, which is used by the large (or ammonia) chain to synthesize carbamoyl phosphate. Tetramer of heterodimers (alpha,beta)4. Mg(2+) serves as cofactor. The cofactor is Mn(2+).

It carries out the reaction hydrogencarbonate + L-glutamine + 2 ATP + H2O = carbamoyl phosphate + L-glutamate + 2 ADP + phosphate + 2 H(+). The catalysed reaction is hydrogencarbonate + NH4(+) + 2 ATP = carbamoyl phosphate + 2 ADP + phosphate + 2 H(+). The protein operates within amino-acid biosynthesis; L-arginine biosynthesis; carbamoyl phosphate from bicarbonate: step 1/1. It functions in the pathway pyrimidine metabolism; UMP biosynthesis via de novo pathway; (S)-dihydroorotate from bicarbonate: step 1/3. Large subunit of the glutamine-dependent carbamoyl phosphate synthetase (CPSase). CPSase catalyzes the formation of carbamoyl phosphate from the ammonia moiety of glutamine, carbonate, and phosphate donated by ATP, constituting the first step of 2 biosynthetic pathways, one leading to arginine and/or urea and the other to pyrimidine nucleotides. The large subunit (synthetase) binds the substrates ammonia (free or transferred from glutamine from the small subunit), hydrogencarbonate and ATP and carries out an ATP-coupled ligase reaction, activating hydrogencarbonate by forming carboxy phosphate which reacts with ammonia to form carbamoyl phosphate. This is Carbamoyl phosphate synthase large chain from Streptococcus pneumoniae (strain ATCC BAA-255 / R6).